Here is a 301-residue protein sequence, read N- to C-terminus: ATP synthase F(0) complex subunit B1, mitochondrial (301 aa).

The N-terminal 21 residues, 1-21 (MSLSRLSSPQTFSRVFIVARG), are a transit peptide targeting the mitochondrion.

This sequence belongs to the eukaryotic ATPase B chain family. In terms of assembly, subunit of the F-type ATPase which has 2 components, CF(1) - the catalytic core - and CF(0) - the membrane proton channel.

The protein localises to the mitochondrion. Its subcellular location is the mitochondrion inner membrane. Mitochondrial membrane ATP synthase (F(1)F(0) ATP synthase or Complex V) produces ATP from ADP in the presence of a proton gradient across the membrane which is generated by electron transport complexes of the respiratory chain. F-type ATPases consist of two structural domains, F(1) - containing the extramembraneous catalytic core, and F(0) - containing the membrane proton channel, linked together by a central stalk and a peripheral stalk. During catalysis, ATP synthesis in the catalytic domain of F(1) is coupled via a rotary mechanism of the central stalk subunits to proton translocation. Part of the complex F(0) domain and the peripheric stalk, which acts as a stator to hold the subunits of the catalytic subcomplexes relative to the rotary elements. Plays a role in germline development. The chain is ATP synthase F(0) complex subunit B1, mitochondrial from Caenorhabditis elegans.